The sequence spans 328 residues: Pancreas transcription factor 1 subunit alpha (328 aa).

The bHLH domain maps to 163-215; the sequence is QLRQAANVRERRRMQSINDAFEGLRSHIPTLPYEKRLSKVDTLRLAIGYINFL. 2 disordered regions span residues 259–278 and 305–328; these read RGTRSPSPSDPDYGLPPLAG and DPRKLNSKSSFNNIENEPPFEFVS.

In terms of assembly, component of the pancreas transcription factor 1 complex (PTF1) which is composed of TCF3/p75, TCF12/p64 and PTF1A/p48. TCF3 is responsible for the nuclear import of the p48/p64 complex. Interacts with TCF3 and RBPSUH/RBP-Jkappa. As to expression, pancreas-specific (at protein level). Loss of expression is seen in ductal type pancreas cancers.

Its subcellular location is the nucleus. The protein localises to the cytoplasm. Its function is as follows. Transcription factor implicated in the cell fate determination in various organs. Binds to the E-box consensus sequence 5'-CANNTG-3'. Plays a role in early and late pancreas development and differentiation. Important for determining whether cells allocated to the pancreatic buds continue towards pancreatic organogenesis or revert back to duodenal fates. May be involved in the maintenance of exocrine pancreas-specific gene expression including ELA1 and amylase. Required for the formation of pancreatic acinar and ductal cells. Plays an important role in cerebellar development. Directly regulated by FOXN4 and RORC during retinal development, FOXN4-PTF1A pathway plays a central role in directing the differentiation of retinal progenitors towards horizontal and amacrine fates. The polypeptide is Pancreas transcription factor 1 subunit alpha (PTF1A) (Homo sapiens (Human)).